The sequence spans 2201 residues: Genome polyprotein (2201 aa).

Glycine 2 carries the N-myristoyl glycine; by host lipid modification. At 2–1511 (GAQVSTQKTG…YVSRAFICLQ (1510 aa)) the chain is on the cytoplasmic side. Residues 566–582 (KLQGDVEEAIERARCTV) form an amphipathic alpha-helix region. The short motif at 858–860 (RGD) is the Cell attachment site element. Residues histidine 888 and aspartate 906 each act as for protease 2A activity in the active site. Cysteine 923 and cysteine 925 together coordinate Zn(2+). Cysteine 977 (for protease 2A activity) is an active-site residue. Residues cysteine 983 and histidine 985 each coordinate Zn(2+). The tract at residues 1117-1189 (NDSWLKKFTE…EQSAPSQSDQ (73 aa)) is membrane-binding. Residues 1117-1255 (NDSWLKKFTE…SPGAGKSVAT (139 aa)) are oligomerization. Residues 1138-1142 (AIKIQ) are RNA-binding. Residues 1221-1377 (EKKMSNYIQF…SMYSQNGKIN (157 aa)) form the SF3 helicase domain. Residues cysteine 1385, cysteine 1397, and cysteine 1402 each contribute to the Zn(2+) site. A C4-type; degenerate zinc finger spans residues 1385-1402 (CDEECCPVNFKKCCPLVC). The tract at residues 1429-1436 (EYNHRHSV) is RNA-binding. The tract at residues 1440-1445 (LEALFQ) is oligomerization. Residues 1512–1527 (AITTFVSVAGIIYIIY) lie within the membrane without spanning it. The Cytoplasmic segment spans residues 1528 to 2201 (KLFAGFQGAY…TLRRKWLDSF (674 aa)). Tyrosine 1537 carries the post-translational modification O-(5'-phospho-RNA)-tyrosine. The Peptidase C3 domain maps to 1557 to 1735 (GPAFEFAVAM…FSAALLKHYF (179 aa)). Catalysis depends on for protease 3C activity residues histidine 1596, glutamate 1627, and cysteine 1703. The region spanning 1966-2082 (GHLIAFDYSG…SYPWPIDASL (117 aa)) is the RdRp catalytic domain. Positions 1972 and 2068 each coordinate Mg(2+).

Belongs to the picornaviruses polyprotein family. As to quaternary structure, interacts with capsid protein VP1 and capsid protein VP3 to form heterotrimeric protomers. Interacts with capsid protein VP0, and capsid protein VP3 to form heterotrimeric protomers. Five protomers subsequently associate to form pentamers which serve as building blocks for the capsid. Interacts with capsid protein VP2, capsid protein VP3 and capsid protein VP4 following cleavage of capsid protein VP0. Interacts with host integrin heterodimer ITGAV/ITGB6. In terms of assembly, interacts with capsid protein VP1 and capsid protein VP3 in the mature capsid. As to quaternary structure, interacts with capsid protein VP0 and capsid protein VP1 to form heterotrimeric protomers. Five protomers subsequently associate to form pentamers which serve as building blocks for the capsid. Interacts with capsid protein VP4 in the mature capsid. Interacts with protein 2C; this interaction may be important for virion morphogenesis. Interacts with capsid protein VP1 and capsid protein VP3. In terms of assembly, homodimer. As to quaternary structure, homohexamer; forms a hexameric ring structure with 6-fold symmetry characteristic of AAA+ ATPases. Interacts (via N-terminus) with host RTN3 (via reticulon domain); this interaction is important for viral replication. Interacts with capsid protein VP3; this interaction may be important for virion morphogenesis. Interacts with protein 3CD. In terms of assembly, homodimer. Interacts with host GBF1. Interacts (via GOLD domain) with host ACBD3 (via GOLD domain); this interaction allows the formation of a viral protein 3A/ACBD3 heterotetramer with a 2:2 stoichiometry, which will stimulate the recruitment of host PI4KB in order to synthesize PI4P at the viral RNA replication sites. As to quaternary structure, interacts with RNA-directed RNA polymerase. Interacts with protein 3AB and with RNA-directed RNA polymerase. In terms of assembly, interacts with Viral protein genome-linked and with protein 3CD. Requires Mg(2+) as cofactor. In terms of processing, specific enzymatic cleavages in vivo by the viral proteases yield processing intermediates and the mature proteins. Myristoylation is required for the formation of pentamers during virus assembly. Further assembly of 12 pentamers and a molecule of genomic RNA generates the provirion. Post-translationally, during virion maturation, immature virions are rendered infectious following cleavage of VP0 into VP4 and VP2. This maturation seems to be an autocatalytic event triggered by the presence of RNA in the capsid and it is followed by a conformational change infectious virion. In terms of processing, myristoylation is required during RNA encapsidation and formation of the mature virus particle. VPg is uridylylated by the polymerase into VPg-pUpU. This acts as a nucleotide-peptide primer for the genomic RNA replication.

The protein resides in the virion. Its subcellular location is the host cytoplasm. It localises to the host cytoplasmic vesicle membrane. The protein localises to the host nucleus. It carries out the reaction a ribonucleoside 5'-triphosphate + H2O = a ribonucleoside 5'-diphosphate + phosphate + H(+). It catalyses the reaction Selective cleavage of Tyr-|-Gly bond in the picornavirus polyprotein.. The catalysed reaction is RNA(n) + a ribonucleoside 5'-triphosphate = RNA(n+1) + diphosphate. The enzyme catalyses Selective cleavage of Gln-|-Gly bond in the poliovirus polyprotein. In other picornavirus reactions Glu may be substituted for Gln, and Ser or Thr for Gly.. Replication or transcription is subject to high level of random mutations by the nucleotide analog ribavirin. Its function is as follows. Forms an icosahedral capsid of pseudo T=3 symmetry with capsid proteins VP2 and VP3. The capsid is 300 Angstroms in diameter, composed of 60 copies of each capsid protein and enclosing the viral positive strand RNA genome. Capsid protein VP1 mainly forms the vertices of the capsid. Capsid protein VP1 interacts with host integrin ITGAV/ITGB6 to provide virion attachment to target host cells. This attachment induces virion internalization. Tyrosine kinases are probably involved in the entry process. After binding to its receptor, the capsid undergoes conformational changes. Capsid protein VP1 N-terminus (that contains an amphipathic alpha-helix) and capsid protein VP4 are externalized. Together, they shape a pore in the host membrane through which viral genome is translocated to host cell cytoplasm. In terms of biological role, forms an icosahedral capsid of pseudo T=3 symmetry with capsid proteins VP2 and VP3. The capsid is 300 Angstroms in diameter, composed of 60 copies of each capsid protein and enclosing the viral positive strand RNA genome. Lies on the inner surface of the capsid shell. After binding to the host receptor, the capsid undergoes conformational changes. Capsid protein VP4 is released, Capsid protein VP1 N-terminus is externalized, and together, they shape a pore in the host membrane through which the viral genome is translocated into the host cell cytoplasm. Functionally, component of immature procapsids, which is cleaved into capsid proteins VP4 and VP2 after maturation. Allows the capsid to remain inactive before the maturation step. Its function is as follows. Cysteine protease that cleaves viral polyprotein and specific host proteins. It is responsible for the autocatalytic cleavage between the P1 and P2 regions, which is the first cleavage occurring in the polyprotein. Also cleaves the host translation initiation factor EIF4G1, in order to shut down the capped cellular mRNA translation. Inhibits the host nucleus-cytoplasm protein and RNA trafficking by cleaving host members of the nuclear pores. Counteracts stress granule formation probably by antagonizing its assembly or promoting its dissassembly. Cleaves and inhibits host IFIH1/MDA5, thereby inhibiting the type-I IFN production and the establishment of the antiviral state. Cleaves and inhibits host MAVS, thereby inhibiting the type-I IFN production and the establishment of the antiviral state. In terms of biological role, plays an essential role in the virus replication cycle by acting as a viroporin. Creates a pore in the host endoplasmic reticulum and as a consequence releases Ca2+ in the cytoplasm of infected cell. In turn, high levels of cytoplasmic calcium may trigger membrane trafficking and transport of viral ER-associated proteins to viroplasms, sites of viral genome replication. Induces and associates with structural rearrangements of intracellular membranes. Displays RNA-binding, nucleotide binding and NTPase activities. May play a role in virion morphogenesis and viral RNA encapsidation by interacting with the capsid protein VP3. Functionally, localizes the viral replication complex to the surface of membranous vesicles. Together with protein 3CD binds the Cis-Active RNA Element (CRE) which is involved in RNA synthesis initiation. Acts as a cofactor to stimulate the activity of 3D polymerase, maybe through a nucleid acid chaperone activity. Its function is as follows. Localizes the viral replication complex to the surface of membranous vesicles. It inhibits host cell endoplasmic reticulum-to-Golgi apparatus transport and causes the disassembly of the Golgi complex, possibly through GBF1 interaction. This would result in depletion of MHC, trail receptors and IFN receptors at the host cell surface. Plays an essential role in viral RNA replication by recruiting ACBD3 and PI4KB at the viral replication sites, thereby allowing the formation of the rearranged membranous structures where viral replication takes place. In terms of biological role, acts as a primer for viral RNA replication and remains covalently bound to viral genomic RNA. VPg is uridylylated prior to priming replication into VPg-pUpU. The oriI viral genomic sequence may act as a template for this. The VPg-pUpU is then used as primer on the genomic RNA poly(A) by the RNA-dependent RNA polymerase to replicate the viral genome. During genome replication, the VPg-RNA linkage is removed by the host TDP2, thereby accelerating replication. During the late stage of the replication cycle, host TDP2 is excluded from sites of viral RNA synthesis and encapsidation, allowing for the generation of progeny virions. Involved in the viral replication complex and viral polypeptide maturation. It exhibits protease activity with a specificity and catalytic efficiency that is different from protease 3C. Protein 3CD lacks polymerase activity. Protein 3CD binds to the 5'UTR of the viral genome. Functionally, replicates the viral genomic RNA on the surface of intracellular membranes. May form linear arrays of subunits that propagate along a strong head-to-tail interaction called interface-I. Covalently attaches UMP to a tyrosine of VPg, which is used to prime RNA synthesis. The positive stranded RNA genome is first replicated at virus induced membranous vesicles, creating a dsRNA genomic replication form. This dsRNA is then used as template to synthesize positive stranded RNA genomes. ss(+)RNA genomes are either translated, replicated or encapsidated. Its function is as follows. Major viral protease that mediates proteolytic processing of the polyprotein. Cleaves host EIF5B, contributing to host translation shutoff. Also cleaves host PABPC1, contributing to host translation shutoff. Cleaves host NLRP1, triggers host N-glycine-mediated degradation of the autoinhibitory NLRP1 N-terminal fragment. The sequence is that of Genome polyprotein from Coxsackievirus A9 (strain Griggs).